A 242-amino-acid polypeptide reads, in one-letter code: Segregation and condensation protein A (242 aa).

Belongs to the ScpA family. As to quaternary structure, component of a cohesin-like complex composed of ScpA, ScpB and the Smc homodimer, in which ScpA and ScpB bind to the head domain of Smc. The presence of the three proteins is required for the association of the complex with DNA.

The protein resides in the cytoplasm. In terms of biological role, participates in chromosomal partition during cell division. May act via the formation of a condensin-like complex containing Smc and ScpB that pull DNA away from mid-cell into both cell halves. The sequence is that of Segregation and condensation protein A from Streptococcus pneumoniae serotype 19F (strain G54).